The following is a 360-amino-acid chain: Protein Wnt-2 (360 aa).

The signal sequence occupies residues 1–25 (MNAPLGGIWLWLPLLLTWLSPEVSS). 11 disulfide bridges follow: Cys76–Cys87, Cys127–Cys135, Cys137–Cys157, Cys206–Cys220, Cys208–Cys215, Cys278–Cys309, Cys294–Cys304, Cys308–Cys348, Cys324–Cys339, Cys326–Cys336, and Cys331–Cys332. Ser212 carries the O-palmitoleoyl serine; by PORCN lipid modification. Residue Asn295 is glycosylated (N-linked (GlcNAc...) asparagine).

This sequence belongs to the Wnt family. Post-translationally, palmitoleoylation is required for efficient binding to frizzled receptors. Depalmitoleoylation leads to Wnt signaling pathway inhibition.

The protein resides in the secreted. Its subcellular location is the extracellular space. It is found in the extracellular matrix. Ligand for members of the frizzled family of seven transmembrane receptors. Probable developmental protein. May be a signaling molecule which affects the development of discrete regions of tissues. Is likely to signal over only few cell diameters. In Carollia perspicillata (Seba's short-tailed bat), this protein is Protein Wnt-2 (WNT2).